The chain runs to 694 residues: Polyribonucleotide nucleotidyltransferase (694 aa).

Residues Asp-486 and Asp-492 each coordinate Mg(2+). A KH domain is found at 553–612 (PRIETMQIKPTKIASVIGPGGKQIRQIIEETGVQIDVNDLGVVSISASSASAINKAKEII). An S1 motif domain is found at 622–690 (GKTYRGRVTS…EKGQLKLSHK (69 aa)).

This sequence belongs to the polyribonucleotide nucleotidyltransferase family. Mg(2+) is required as a cofactor.

Its subcellular location is the cytoplasm. It carries out the reaction RNA(n+1) + phosphate = RNA(n) + a ribonucleoside 5'-diphosphate. In terms of biological role, involved in mRNA degradation. Catalyzes the phosphorolysis of single-stranded polyribonucleotides processively in the 3'- to 5'-direction. In Chlamydia pneumoniae (Chlamydophila pneumoniae), this protein is Polyribonucleotide nucleotidyltransferase.